Reading from the N-terminus, the 194-residue chain is Adenylate kinase (194 aa).

10-15 is a binding site for ATP; that stretch reads GAGKGT. An NMP region spans residues 30 to 59; the sequence is STGDMLRAAVAQQSEIGKRAKAVMDAGQLV. Residues threonine 31, arginine 36, 57–59, 85–88, and glutamine 92 each bind AMP; these read QLV and GYPR. The segment at 126-142 is LID; it reads SRVAETIAKGGQVRSDD. Arginine 127 lines the ATP pocket. 2 residues coordinate AMP: arginine 139 and arginine 150. Alanine 178 is a binding site for ATP.

Belongs to the adenylate kinase family. As to quaternary structure, monomer.

It localises to the cytoplasm. The enzyme catalyses AMP + ATP = 2 ADP. It functions in the pathway purine metabolism; AMP biosynthesis via salvage pathway; AMP from ADP: step 1/1. Its function is as follows. Catalyzes the reversible transfer of the terminal phosphate group between ATP and AMP. Plays an important role in cellular energy homeostasis and in adenine nucleotide metabolism. This Brucella canis (strain ATCC 23365 / NCTC 10854 / RM-666) protein is Adenylate kinase.